A 543-amino-acid polypeptide reads, in one-letter code: Chaperonin GroEL (543 aa).

Residues 29–32 (TLGP), 86–90 (DGTTT), Gly-413, 476–478 (NAA), and Asp-492 each bind ATP.

This sequence belongs to the chaperonin (HSP60) family. As to quaternary structure, forms a cylinder of 14 subunits composed of two heptameric rings stacked back-to-back. Interacts with the co-chaperonin GroES.

It is found in the cytoplasm. It carries out the reaction ATP + H2O + a folded polypeptide = ADP + phosphate + an unfolded polypeptide.. Functionally, together with its co-chaperonin GroES, plays an essential role in assisting protein folding. The GroEL-GroES system forms a nano-cage that allows encapsulation of the non-native substrate proteins and provides a physical environment optimized to promote and accelerate protein folding. The chain is Chaperonin GroEL from Streptococcus pyogenes serotype M49 (strain NZ131).